The primary structure comprises 340 residues: MVFIDACFRKKTPYTPIWMMRQAGRYLPEYMEVRNKAGDFLTLCKNPKMAAEVTLQPVEILDVDAAILFSDILVIPLEMGMDLRFEKGEGPVFSKPVRTWEDLGSLYEFPEEKLTYVYETIKIVRKKLPKDKALIGFSGAPWTLATYMVEGSGSKTYAAIKKLIYTDPEFMHALMIKITEAVKAYLVKQIESGVNAVQIFDSWASALEKEKFFEFSWDYMVDIAEFLKERYPEIPVILFPKGIAGYLDDIYGKFDVFGVDWGTPIDLAKEKLGNKYVLQGNMEPTRLYSKEATKEGVEKIVEVMGAKEGHIFNLGHGMLPDLPVENAKYLVELVHDLTRR.

Residues 21–25 (RQAGR), D71, Y147, S202, and H316 contribute to the substrate site.

The protein belongs to the uroporphyrinogen decarboxylase family. Homodimer.

It is found in the cytoplasm. It carries out the reaction uroporphyrinogen III + 4 H(+) = coproporphyrinogen III + 4 CO2. It participates in porphyrin-containing compound metabolism; protoporphyrin-IX biosynthesis; coproporphyrinogen-III from 5-aminolevulinate: step 4/4. In terms of biological role, catalyzes the decarboxylation of four acetate groups of uroporphyrinogen-III to yield coproporphyrinogen-III. This chain is Uroporphyrinogen decarboxylase, found in Nitratiruptor sp. (strain SB155-2).